Here is a 158-residue protein sequence, read N- to C-terminus: Small ribosomal subunit protein uS7 (158 aa).

This sequence belongs to the universal ribosomal protein uS7 family. In terms of assembly, part of the 30S ribosomal subunit. Contacts proteins S9 and S11.

One of the primary rRNA binding proteins, it binds directly to 16S rRNA where it nucleates assembly of the head domain of the 30S subunit. Is located at the subunit interface close to the decoding center, probably blocks exit of the E-site tRNA. This chain is Small ribosomal subunit protein uS7, found in Wolbachia pipientis subsp. Culex pipiens (strain wPip).